Here is a 456-residue protein sequence, read N- to C-terminus: Exodeoxyribonuclease 7 large subunit (456 aa).

It belongs to the XseA family. As to quaternary structure, heterooligomer composed of large and small subunits.

It is found in the cytoplasm. The enzyme catalyses Exonucleolytic cleavage in either 5'- to 3'- or 3'- to 5'-direction to yield nucleoside 5'-phosphates.. Bidirectionally degrades single-stranded DNA into large acid-insoluble oligonucleotides, which are then degraded further into small acid-soluble oligonucleotides. The sequence is that of Exodeoxyribonuclease 7 large subunit from Escherichia coli (strain SE11).